The chain runs to 230 residues: Urease accessory protein UreG (230 aa).

Residues 1–31 (MPPHFLSADSTGQPHRHADRPKRVRTPGEPL) form a disordered region. The segment covering 14–25 (PHRHADRPKRVR) has biased composition (basic residues). Position 37 to 44 (37 to 44 (GPVGSGKT)) interacts with GTP.

Belongs to the SIMIBI class G3E GTPase family. UreG subfamily. In terms of assembly, homodimer. UreD, UreF and UreG form a complex that acts as a GTP-hydrolysis-dependent molecular chaperone, activating the urease apoprotein by helping to assemble the nickel containing metallocenter of UreC. The UreE protein probably delivers the nickel.

The protein resides in the cytoplasm. In terms of biological role, facilitates the functional incorporation of the urease nickel metallocenter. This process requires GTP hydrolysis, probably effectuated by UreG. The chain is Urease accessory protein UreG from Mycobacterium sp. (strain JLS).